We begin with the raw amino-acid sequence, 379 residues long: Leukocyte elastase inhibitor (379 aa).

Met1 carries the post-translational modification N-acetylmethionine. An N6-acetyllysine mark is found at Lys137 and Lys177. Ser300 is modified (phosphoserine). The tract at residues 351–379 (NFTADHPFLFFIRHNSSGSILFLGRFSSP) is CARD-binding motif (CBM).

Belongs to the serpin family. Ov-serpin subfamily. In terms of assembly, monomer. Interacts (via C-terminus) with CASP1; CASP4 (via CARD domain) and CASP5; these interactions regulate the activity of inflammatory caspases. Interacts with PRTN3. Interacts with GZMH. In terms of tissue distribution, in human bone marrow, present in all CD45+ populations. Expression levels are highest in the neutrophil lineage, intermediate in monocytic, and lowest in lymphocytic lineage. Within the neutrophil lineage, expression is highest in promyelocytes.

Its subcellular location is the secreted. It is found in the cytoplasm. The protein localises to the cytolytic granule. It localises to the early endosome. Its function is as follows. Neutrophil serine protease inhibitor that plays an essential role in the regulation of the innate immune response, inflammation and cellular homeostasis. Acts primarily to protect the cell from proteases released in the cytoplasm during stress or infection. These proteases are important in killing microbes but when released from granules, these potent enzymes also destroy host proteins and contribute to mortality. Regulates the activity of the neutrophil proteases elastase, cathepsin G, proteinase-3, chymase, chymotrypsin, and kallikrein-3. Also acts as a potent intracellular inhibitor of GZMH by directly blocking its proteolytic activity. During inflammation, limits the activity of inflammatory caspases CASP1, CASP4 and CASP5 by suppressing their caspase-recruitment domain (CARD) oligomerization and enzymatic activation. When secreted, promotes the proliferation of beta-cells via its protease inhibitory function. The protein is Leukocyte elastase inhibitor (SERPINB1) of Homo sapiens (Human).